We begin with the raw amino-acid sequence, 275 residues long: Small ribosomal subunit protein uS2 (275 aa).

The interval 244 to 275 is disordered; that stretch reads REGAEASKKKATVKKKAAPRAASGESAEAAAE. Basic residues predominate over residues 252-261; sequence KKATVKKKAA. Over residues 262–275 the composition is skewed to low complexity; sequence PRAASGESAEAAAE.

Belongs to the universal ribosomal protein uS2 family.

The chain is Small ribosomal subunit protein uS2 from Thioalkalivibrio sulfidiphilus (strain HL-EbGR7).